Consider the following 265-residue polypeptide: Dehydrogenase RED2 (265 aa).

The chain crosses the membrane as a helical span at residues 6-26 (SFLLSKLFLCIALCTAYVAFS). N-linked (GlcNAc...) asparagine glycosylation is present at Asn45. The chain crosses the membrane as a helical span at residues 47–67 (TSTVFGLTIVAIGLSALSSWL). Asn74 carries an N-linked (GlcNAc...) asparagine glycan. Residue Val89 participates in NADP(+) binding. Residue Asn127 is glycosylated (N-linked (GlcNAc...) asparagine). Residues Asp136 and Asn163 each contribute to the NADP(+) site. The N-linked (GlcNAc...) asparagine glycan is linked to Asn176. The active-site Proton donor is the Ser216. Residues Tyr228 and Lys232 each coordinate NADP(+). The active-site Proton acceptor is the Tyr228. The Lowers pKa of active site Tyr role is filled by Lys232.

It belongs to the short-chain dehydrogenases/reductases (SDR) family.

It localises to the membrane. The catalysed reaction is a primary alcohol + NAD(+) = an aldehyde + NADH + H(+). It carries out the reaction a secondary alcohol + NAD(+) = a ketone + NADH + H(+). The protein operates within mycotoxin biosynthesis. In terms of biological role, dehydrogenase; part of the Tox1B locus, one of the 2 loci that mediate the biosynthesis of T-toxin, a family of linear polyketides 37 to 45 carbons in length, of which the major component is 41 carbons, and which leads to high virulence to maize. One of the PKSs (PKS1 or PKS2) could synthesize a precursor, used subsequently by the other PKS as starter unit, to add additional carbons. Variability in the length of the final carbon backbone C35-47 could be achieved by varying the number of condensation cycles, or use of different starter or extender units or might be due to decarboxylation of the penultimate product, catalyzed by DEC1. Additional proteins are required for the biosynthesis of T-toxin, including oxidoreductases RED1, RED2, RED3, LAM1 and OXI1, as well as esterase TOX9. The sequence is that of Dehydrogenase RED2 from Cochliobolus heterostrophus (strain C4 / ATCC 48331 / race T) (Southern corn leaf blight fungus).